The following is a 567-amino-acid chain: Multidrug transporter TPO1_1 (567 aa).

The tract at residues 1 to 71 (MVEEISPKYT…NRRMSRILTG (71 aa)) is disordered. Asparagine 120 carries an N-linked (GlcNAc...) asparagine glycan. 12 helical membrane-spanning segments follow: residues 128 to 148 (IICI…SIFA), 157 to 177 (IYHV…FGFA), 194 to 214 (GVLV…ATSK), 224 to 244 (FFGG…FADM), 253 to 273 (AICL…VMGS), 283 to 303 (WLEY…ALTF), 358 to 378 (PLLL…YLML), 396 to 416 (ELPY…LWYF), 436 to 456 (LIPM…FCWT), 471 to 491 (AGSF…NYII), 498 to 520 (AASA…PLFA), and 531 to 551 (WAGL…LFFL).

The protein belongs to the major facilitator superfamily. DHA1 family. Polyamines/proton antiporter (TC 2.A.1.2.16) subfamily.

It is found in the cell membrane. Its function is as follows. Multidrug resistance transporter involved in resistance to azole antifungal drugs such as the imidazoles miconazole, ketoconazole, and tioconazole; as well as the triazoles itraconazole and fluconazole. Also plays a role in the resistance to other antifungal drug families such as the polyene amphotericin B, the pyrimide analog flucytosine, the fungicide mancozeb, and the polyamine spermine. Decreases the intracellular accumulation of clotrimazole by mediating its extrusion from cells. Involved in virulence by conferring resistance to the human antimicrobial peptide histatin-5. This chain is Multidrug transporter TPO1_1, found in Candida glabrata (strain ATCC 2001 / BCRC 20586 / JCM 3761 / NBRC 0622 / NRRL Y-65 / CBS 138) (Yeast).